Reading from the N-terminus, the 356-residue chain is Histidinol-phosphate aminotransferase (356 aa).

Lys-211 is subject to N6-(pyridoxal phosphate)lysine.

The protein belongs to the class-II pyridoxal-phosphate-dependent aminotransferase family. Histidinol-phosphate aminotransferase subfamily. Homodimer. Pyridoxal 5'-phosphate serves as cofactor.

The catalysed reaction is L-histidinol phosphate + 2-oxoglutarate = 3-(imidazol-4-yl)-2-oxopropyl phosphate + L-glutamate. The protein operates within amino-acid biosynthesis; L-histidine biosynthesis; L-histidine from 5-phospho-alpha-D-ribose 1-diphosphate: step 7/9. This is Histidinol-phosphate aminotransferase from Blochmanniella floridana.